Here is a 68-residue protein sequence, read N- to C-terminus: Conotoxin Lp5.2 (68 aa).

The signal sequence occupies residues 1-19 (MRCVPVFIILLLLASPAAP). A propeptide spanning residues 20 to 54 (KSLETRIQNDLIRAGLTDADLKTEKGFLSGLLNVA) is cleaved from the precursor.

This sequence belongs to the conotoxin T superfamily. Post-translationally, contains 2 disulfide bonds that can be either 'C1-C3, C2-C4' or 'C1-C4, C2-C3', since these disulfide connectivities have been observed for conotoxins with cysteine framework V (for examples, see AC P0DQQ7 and AC P81755). As to expression, expressed by the venom duct.

The protein localises to the secreted. This Conus leopardus (Leopard cone) protein is Conotoxin Lp5.2.